A 133-amino-acid polypeptide reads, in one-letter code: uncharacterized protein (133 aa).

2 helical membrane passes run M8–L28 and S46–A66.

It localises to the membrane. This is an uncharacterized protein from Saccharomyces cerevisiae (strain ATCC 204508 / S288c) (Baker's yeast).